Consider the following 219-residue polypeptide: Thiamine-phosphate synthase (219 aa).

4-amino-2-methyl-5-(diphosphooxymethyl)pyrimidine-binding positions include 45 to 49 (QYREK) and asparagine 77. 2 residues coordinate Mg(2+): aspartate 78 and aspartate 97. Threonine 116 contacts 4-amino-2-methyl-5-(diphosphooxymethyl)pyrimidine. 142–144 (SFT) contacts 2-[(2R,5Z)-2-carboxy-4-methylthiazol-5(2H)-ylidene]ethyl phosphate. Lysine 145 is a 4-amino-2-methyl-5-(diphosphooxymethyl)pyrimidine binding site. 2-[(2R,5Z)-2-carboxy-4-methylthiazol-5(2H)-ylidene]ethyl phosphate is bound by residues glycine 173 and 193 to 194 (VT).

The protein belongs to the thiamine-phosphate synthase family. It depends on Mg(2+) as a cofactor.

The catalysed reaction is 2-[(2R,5Z)-2-carboxy-4-methylthiazol-5(2H)-ylidene]ethyl phosphate + 4-amino-2-methyl-5-(diphosphooxymethyl)pyrimidine + 2 H(+) = thiamine phosphate + CO2 + diphosphate. It carries out the reaction 2-(2-carboxy-4-methylthiazol-5-yl)ethyl phosphate + 4-amino-2-methyl-5-(diphosphooxymethyl)pyrimidine + 2 H(+) = thiamine phosphate + CO2 + diphosphate. The enzyme catalyses 4-methyl-5-(2-phosphooxyethyl)-thiazole + 4-amino-2-methyl-5-(diphosphooxymethyl)pyrimidine + H(+) = thiamine phosphate + diphosphate. Its pathway is cofactor biosynthesis; thiamine diphosphate biosynthesis; thiamine phosphate from 4-amino-2-methyl-5-diphosphomethylpyrimidine and 4-methyl-5-(2-phosphoethyl)-thiazole: step 1/1. Its function is as follows. Condenses 4-methyl-5-(beta-hydroxyethyl)thiazole monophosphate (THZ-P) and 2-methyl-4-amino-5-hydroxymethyl pyrimidine pyrophosphate (HMP-PP) to form thiamine monophosphate (TMP). In Caldicellulosiruptor bescii (strain ATCC BAA-1888 / DSM 6725 / KCTC 15123 / Z-1320) (Anaerocellum thermophilum), this protein is Thiamine-phosphate synthase.